Here is a 125-residue protein sequence, read N- to C-terminus: Protein ApaG (125 aa).

In terms of domain architecture, ApaG spans Met-1–His-125.

The protein is Protein ApaG of Citrobacter koseri (strain ATCC BAA-895 / CDC 4225-83 / SGSC4696).